We begin with the raw amino-acid sequence, 428 residues long: Cell number regulator 13 (428 aa).

Residues 233–280 show a composition bias toward basic and acidic residues; it reads PEKETNVKAPEKKGSNYSESKGETAKSFDDDDDYPKKQNGDYPKKQKD. Residues 233–290 are disordered; that stretch reads PEKETNVKAPEKKGSNYSESKGETAKSFDDDDDYPKKQNGDYPKKQKDTCSTQRCSSQ. Over residues 281-290 the composition is skewed to polar residues; that stretch reads TCSTQRCSSQ. Residues 354-370 traverse the membrane as a helical segment; that stretch reads IMAYSLILSCCCYTCCV.

Expressed in roots, coleoptiles, leaves, stalks, apical meristems, immature ears, embryos, endosperm, pericarp, silks and tassel spikelets. Not detected in pollen.

It is found in the membrane. This is Cell number regulator 13 (CNR13) from Zea mays (Maize).